The following is a 194-amino-acid chain: 7-methyl-GTP pyrophosphatase (194 aa).

D69 acts as the Proton acceptor in catalysis.

This sequence belongs to the Maf family. YceF subfamily. Requires a divalent metal cation as cofactor.

The protein localises to the cytoplasm. The catalysed reaction is N(7)-methyl-GTP + H2O = N(7)-methyl-GMP + diphosphate + H(+). Its function is as follows. Nucleoside triphosphate pyrophosphatase that hydrolyzes 7-methyl-GTP (m(7)GTP). May have a dual role in cell division arrest and in preventing the incorporation of modified nucleotides into cellular nucleic acids. In Salmonella typhi, this protein is 7-methyl-GTP pyrophosphatase (yceF).